The sequence spans 248 residues: Pyridoxine 5'-phosphate synthase (248 aa).

A 3-amino-2-oxopropyl phosphate-binding site is contributed by Asn-10. 12–13 (DH) lines the 1-deoxy-D-xylulose 5-phosphate pocket. Arg-21 lines the 3-amino-2-oxopropyl phosphate pocket. His-46 (proton acceptor) is an active-site residue. Arg-48 and His-53 together coordinate 1-deoxy-D-xylulose 5-phosphate. Glu-73 serves as the catalytic Proton acceptor. 1-deoxy-D-xylulose 5-phosphate is bound at residue Thr-103. His-194 serves as the catalytic Proton donor. Residues Gly-195 and 216-217 (GH) contribute to the 3-amino-2-oxopropyl phosphate site.

Belongs to the PNP synthase family. As to quaternary structure, homooctamer; tetramer of dimers.

Its subcellular location is the cytoplasm. It carries out the reaction 3-amino-2-oxopropyl phosphate + 1-deoxy-D-xylulose 5-phosphate = pyridoxine 5'-phosphate + phosphate + 2 H2O + H(+). Its pathway is cofactor biosynthesis; pyridoxine 5'-phosphate biosynthesis; pyridoxine 5'-phosphate from D-erythrose 4-phosphate: step 5/5. In terms of biological role, catalyzes the complicated ring closure reaction between the two acyclic compounds 1-deoxy-D-xylulose-5-phosphate (DXP) and 3-amino-2-oxopropyl phosphate (1-amino-acetone-3-phosphate or AAP) to form pyridoxine 5'-phosphate (PNP) and inorganic phosphate. This chain is Pyridoxine 5'-phosphate synthase, found in Legionella pneumophila (strain Paris).